Reading from the N-terminus, the 1514-residue chain is Polycomb group protein ASXL1 (1514 aa).

Positions arginine 11 to aspartate 86 constitute an HTH HARE-type domain. Disordered regions lie at residues alanine 95–proline 170 and histidine 183–glutamate 249. Residues aspartate 98–aspartate 107 are compositionally biased toward acidic residues. Polar residues predominate over residues cysteine 111–leucine 145. The segment covering serine 199 to serine 209 has biased composition (low complexity). The segment at lysine 243–arginine 246 is interaction with nucleosomal DNA forming a DNA clamp with BAP1. Positions proline 255 to glycine 364 constitute a DEUBAD domain. Residues leucine 284 to leucine 288 carry the LXXLL motif 1 motif. The interval leucine 300–glycine 655 is interaction with NCOA1. Residues asparagine 310–histidine 315 carry the NEF motif motif. The segment at arginine 336 to lysine 346 is interaction with nucleosomal DNA. Disordered regions lie at residues glutamate 378–glutamine 543, threonine 635–methionine 823, serine 895–tryptophan 914, serine 926–glutamate 952, and isoleucine 964–serine 995. The short motif at phenylalanine 408–aspartate 415 is the Nuclear localization signal element. Over residues valine 458 to glutamine 473 the composition is skewed to polar residues. A phosphoserine mark is found at serine 498 and serine 500. Basic and acidic residues-rich tracts occupy residues glutamine 514–glutamate 525 and proline 533–glutamine 543. Positions isoleucine 638 to glutamate 654 are enriched in gly residues. Residues proline 678–glutamine 692 are compositionally biased toward polar residues. Basic and acidic residues-rich tracts occupy residues alanine 713–leucine 728 and leucine 779–glutamine 793. Positions leucine 808–leucine 812 match the LXXLL motif 2 motif. Residues histidine 971 to aspartate 980 show a composition bias toward polar residues. The required for interaction with RARA stretch occupies residues leucine 1082–leucine 1087. Disordered regions lie at residues lysine 1095–arginine 1131, glutamate 1213–leucine 1234, and serine 1256–aspartate 1338. Over residues aspartate 1119–asparagine 1129 the composition is skewed to polar residues. Composition is skewed to polar residues over residues serine 1256–alanine 1269 and serine 1313–threonine 1324. The PHD-type; atypical zinc finger occupies serine 1476 to valine 1513.

It belongs to the Asx family. Core component of the polycomb repressive deubiquitinase (PR-DUB) complex, at least composed of BAP1, one of ASXL1, ASXL2 or (probably) ASXL3, and one of MBD5 or MBD6. Distinct combinations of ASXL and MBD proteins may preferentially bind specific histone modification marks. The PR-DUB core associates with a number of accessory proteins, including FOXK1, FOXK2, KDM1B, HCFC1 and OGT; KDM1B specifically associates with ASXL2 PR-DUB complexes. Interacts (via DEUBAD domain) with BAP1 (via ULD domain); the interaction is direct and forms a ubiquitin binding cleft. The interaction with BAP1 is important for maintaining BAP1 stability. Together with BAP1, associates (via DEUBAD domain) with nucleosomes; interacts with nucleosomal DNA and stabilizes the orientation of the nucleosome to line up the PR-DUB complex active site with its H2AK118ub1 substrate. Interacts (via PHD domain) with MBD5 and MBD6 (via MBD domain); the interaction is probably direct and mediates association of MBD proteins with the PR-DUB core. Interacts with RARA, RXRA. Interacts with NCOA1. Interacts with PPARA and PPARG. In terms of processing, ubiquitinated by TRIP12, leading to its subsequent degradation following binding of N(6)-methyladenine methylated DNA (6mA).

The protein resides in the nucleus. Its function is as follows. Probable Polycomb group (PcG) protein involved in transcriptional regulation mediated by ligand-bound nuclear hormone receptors, such as retinoic acid receptors (RARs) and peroxisome proliferator-activated receptor gamma (PPARG). Acts as a coactivator of RARA and RXRA through association with NCOA1. Acts as a corepressor for PPARG and suppresses its adipocyte differentiation-inducing activity. Non-catalytic component of the PR-DUB complex, a complex that specifically mediates deubiquitination of histone H2A monoubiquitinated at 'Lys-119' (H2AK119ub1). Acts as a sensor of N(6)-methyladenine methylation on DNA (6mA): recognizes and binds 6mA DNA, leading to its ubiquitination and degradation by TRIP12, thereby inactivating the PR-DUB complex and regulating Polycomb silencing. The PR-DUB complex is an epigenetic regulator of gene expression and acts as a transcriptional coactivator, affecting genes involved in development, cell communication, signaling, cell proliferation and cell viability. ASXL1, ASXL2 and ASXL3 function redundantly in the PR-DUB complex. The ASXL proteins are essential for chromatin recruitment and transcriptional activation of associated genes. ASXL1 and ASXL2 are important for BAP1 protein stability. Together with BAP1, negatively regulates epithelial-mesenchymal transition (EMT) of trophoblast stem cells during placental development by regulating genes involved in epithelial cell integrity, cell adhesion and cytoskeletal organization. In Mus musculus (Mouse), this protein is Polycomb group protein ASXL1 (Asxl1).